The primary structure comprises 299 residues: Coenzyme PQQ synthesis protein B (299 aa).

It belongs to the PqqB family.

The protein operates within cofactor biosynthesis; pyrroloquinoline quinone biosynthesis. Its function is as follows. May be involved in the transport of PQQ or its precursor to the periplasm. The sequence is that of Coenzyme PQQ synthesis protein B from Xanthomonas campestris pv. campestris (strain 8004).